The chain runs to 1562 residues: Cell surface antigen I/II (1562 aa).

A signal peptide spans 1-38; that stretch reads MKVKKTYGFRKSKISKTLCGAVLGTVAAVSVAGQKVFA. Residues 42–54 are compositionally biased toward low complexity; sequence TTTSDVDTKVVGT. A disordered region spans residues 42–91; the sequence is TTTSDVDTKVVGTQTGNPATNLPEAQGSASKEAEQSQNQAGETNGSIPVE. The segment at 60 to 551 is helical; sequence ATNLPEAQGS…SKAKYDQKIL (492 aa). A compositionally biased stretch (polar residues) spans 76 to 87; sequence QSQNQAGETNGS. Ag I/II A repeat units lie at residues 147-221, 222-303, 304-385, and 386-467; these read KKTT…QKTN, AANQ…QEAN, AANE…KKAN, and AANE…QKDL. Disordered regions lie at residues 824–973 and 1482–1509; these read VPKV…PTDP and SNTV…RTST. Residues 943 to 958 show a composition bias toward pro residues; it reads PTPPTPTPDQPEPNKP. A compositionally biased stretch (low complexity) spans 1500–1509; that stretch reads QDPSSPRTST. The LPXTG sorting signal signature appears at 1529-1533; it reads LPNTG. Thr-1532 is subject to Pentaglycyl murein peptidoglycan amidated threonine. The propeptide at 1533 to 1562 is removed by sortase; the sequence is GVTNNAYMPLLGIIGLVTSFSLLGLKAKKD.

Belongs to the antigen I/II family. Detected as a 185 kDa cell surface protein, but also as 2 proteins in S.mutans culture supernatants of about 150 kDa (antigen I) and 50 kDa (antigen II); antigen II is only seen after proteolysis. Antigen I and II have the same N-terminus but different C-termini.

The protein resides in the secreted. The protein localises to the cell wall. Functionally, surface protein antigen implicated in dental caries. This is Cell surface antigen I/II from Streptococcus mutans serotype c (strain ATCC 700610 / UA159).